A 635-amino-acid polypeptide reads, in one-letter code: Threonine--tRNA ligase (635 aa).

The region spanning 1–62 (MITITLPDGS…EHDAILRIIT (62 aa)) is the TGS domain. The segment at 244-535 (DHRKIGKAQD…LIEHYAGIWP (292 aa)) is catalytic. Residues Cys-335, His-386, and His-512 each contribute to the Zn(2+) site.

Belongs to the class-II aminoacyl-tRNA synthetase family. In terms of assembly, homodimer. Requires Zn(2+) as cofactor.

The protein resides in the cytoplasm. The enzyme catalyses tRNA(Thr) + L-threonine + ATP = L-threonyl-tRNA(Thr) + AMP + diphosphate + H(+). Functionally, catalyzes the attachment of threonine to tRNA(Thr) in a two-step reaction: L-threonine is first activated by ATP to form Thr-AMP and then transferred to the acceptor end of tRNA(Thr). Also edits incorrectly charged L-seryl-tRNA(Thr). In Xylella fastidiosa (strain M23), this protein is Threonine--tRNA ligase.